A 149-amino-acid chain; its full sequence is Large ribosomal subunit protein bL9 (149 aa).

It belongs to the bacterial ribosomal protein bL9 family.

Functionally, binds to the 23S rRNA. The protein is Large ribosomal subunit protein bL9 of Shewanella amazonensis (strain ATCC BAA-1098 / SB2B).